A 166-amino-acid chain; its full sequence is Transcriptional repressor NrdR (166 aa).

A zinc finger lies at 3-34 (CPHCHHNGSRVVDSRPTDDGRVIRRRRECESC). Residues 49 to 139 (LLVIKKNGTR…VYRQFKDTGV (91 aa)) enclose the ATP-cone domain.

It belongs to the NrdR family. The cofactor is Zn(2+).

Functionally, negatively regulates transcription of bacterial ribonucleotide reductase nrd genes and operons by binding to NrdR-boxes. The protein is Transcriptional repressor NrdR of Levilactobacillus brevis (strain ATCC 367 / BCRC 12310 / CIP 105137 / JCM 1170 / LMG 11437 / NCIMB 947 / NCTC 947) (Lactobacillus brevis).